A 205-amino-acid polypeptide reads, in one-letter code: Holliday junction branch migration complex subunit RuvA (205 aa).

Residues 1–64 (MIGRIRGLLV…EDAQLLYGFI (64 aa)) are domain I. A domain II region spans residues 65–143 (SKQERALFRL…SLMEASVGSE (79 aa)). The segment at 144-156 (REFMLQSNYTAPV) is flexible linker. Positions 157–205 (VANTAEEDAIAALLSLGYKPAQASKAVSAVYVDGIDSESLIKSALKSML) are domain III.

It belongs to the RuvA family. As to quaternary structure, homotetramer. Forms an RuvA(8)-RuvB(12)-Holliday junction (HJ) complex. HJ DNA is sandwiched between 2 RuvA tetramers; dsDNA enters through RuvA and exits via RuvB. An RuvB hexamer assembles on each DNA strand where it exits the tetramer. Each RuvB hexamer is contacted by two RuvA subunits (via domain III) on 2 adjacent RuvB subunits; this complex drives branch migration. In the full resolvosome a probable DNA-RuvA(4)-RuvB(12)-RuvC(2) complex forms which resolves the HJ.

It localises to the cytoplasm. The RuvA-RuvB-RuvC complex processes Holliday junction (HJ) DNA during genetic recombination and DNA repair, while the RuvA-RuvB complex plays an important role in the rescue of blocked DNA replication forks via replication fork reversal (RFR). RuvA specifically binds to HJ cruciform DNA, conferring on it an open structure. The RuvB hexamer acts as an ATP-dependent pump, pulling dsDNA into and through the RuvAB complex. HJ branch migration allows RuvC to scan DNA until it finds its consensus sequence, where it cleaves and resolves the cruciform DNA. This is Holliday junction branch migration complex subunit RuvA from Shewanella piezotolerans (strain WP3 / JCM 13877).